Reading from the N-terminus, the 243-residue chain is Small ribosomal subunit protein uS3 (243 aa).

Residues 39–107 (MRKFVMSELK…ETHLNIVEVR (69 aa)) form the KH type-2 domain. The segment at 214 to 243 (ASERRAMEGDAQGPASRDRDRDRDRRRDNA) is disordered. Positions 229–243 (SRDRDRDRDRRRDNA) are enriched in basic and acidic residues.

It belongs to the universal ribosomal protein uS3 family. As to quaternary structure, part of the 30S ribosomal subunit. Forms a tight complex with proteins S10 and S14.

Its function is as follows. Binds the lower part of the 30S subunit head. Binds mRNA in the 70S ribosome, positioning it for translation. This Rhizobium leguminosarum bv. trifolii (strain WSM2304) protein is Small ribosomal subunit protein uS3.